The following is a 1427-amino-acid chain: Coiled-coil domain-containing protein 144A (1427 aa).

Basic and acidic residues predominate over residues 1–11; it reads MASWGGEKRGG. 5 disordered regions span residues 1-32, 87-189, 213-261, 453-485, and 528-586; these read MASW…VGSQ, AARS…LTER, LPEN…CDRE, NMNQ…DSDR, and EEEM…EVKN. 2 stretches are compositionally biased toward polar residues: residues 129–150 and 167–178; these read PESL…LSDE and VSPSMPENQSAT. The segment covering 224-234 has biased composition (acidic residues); the sequence is QDSELTSEEEQ. Residues 453–467 show a composition bias toward polar residues; sequence NMNQNSDSGSTNNYK. Residues 490-545 are a coiled coil; the sequence is YLHEELQQDMQKFKNEVNTLEEEFLALKKEDVQLHKDVEEEMEKHRSNSTELSGTL. Over residues 528–537 the composition is skewed to basic and acidic residues; that stretch reads EEEMEKHRSN. A compositionally biased stretch (low complexity) spans 543-552; it reads GTLTDGTTVG. The span at 563 to 584 shows a compositional bias: basic and acidic residues; the sequence is PRKENGEHDRPADKTSNEKNEV. Coiled-coil stretches lie at residues 648-1129 and 1155-1309; these read LLKL…DLTE and FSMK…TQLT.

This sequence belongs to the CCDC144 family.

Functionally, may play a role in preventing the formation of kidney stones through inhibition of calcium oxalate monohydrate (COM) crystallization, attenuating COM-induced apoptotic injury to renal epithelial cells. May exhibit antilithiatic (preventing the formation of kidney stones) activity through crystal binding, hindering the crystal attachment to renal epithelial cells, a pre-requisite to initiate inflammatory response. The sequence is that of Coiled-coil domain-containing protein 144A (CCDC144A) from Homo sapiens (Human).